The following is a 523-amino-acid chain: 2-isopropylmalate synthase (523 aa).

Residues 5–267 (VIIFDTTLRD…HTAINHQEIW (263 aa)) form the Pyruvate carboxyltransferase domain. D14, H202, H204, and N238 together coordinate Mn(2+). The regulatory domain stretch occupies residues 392 to 523 (RLDYFSVQSG…QHNENNKETV (132 aa)).

The protein belongs to the alpha-IPM synthase/homocitrate synthase family. LeuA type 1 subfamily. In terms of assembly, homodimer. The cofactor is Mn(2+).

It is found in the cytoplasm. The catalysed reaction is 3-methyl-2-oxobutanoate + acetyl-CoA + H2O = (2S)-2-isopropylmalate + CoA + H(+). Its pathway is amino-acid biosynthesis; L-leucine biosynthesis; L-leucine from 3-methyl-2-oxobutanoate: step 1/4. Its function is as follows. Catalyzes the condensation of the acetyl group of acetyl-CoA with 3-methyl-2-oxobutanoate (2-ketoisovalerate) to form 3-carboxy-3-hydroxy-4-methylpentanoate (2-isopropylmalate). This chain is 2-isopropylmalate synthase, found in Escherichia coli (strain SMS-3-5 / SECEC).